Here is a 419-residue protein sequence, read N- to C-terminus: UDP-N-acetylglucosamine 1-carboxyvinyltransferase (419 aa).

A phosphoenolpyruvate-binding site is contributed by 22–23 (KN). Residue arginine 91 participates in UDP-N-acetyl-alpha-D-glucosamine binding. Cysteine 115 serves as the catalytic Proton donor. Cysteine 115 is subject to 2-(S-cysteinyl)pyruvic acid O-phosphothioketal. Residues 120-124 (RPVDL), 160-163 (KVSV), aspartate 305, and isoleucine 327 contribute to the UDP-N-acetyl-alpha-D-glucosamine site.

The protein belongs to the EPSP synthase family. MurA subfamily.

It is found in the cytoplasm. It carries out the reaction phosphoenolpyruvate + UDP-N-acetyl-alpha-D-glucosamine = UDP-N-acetyl-3-O-(1-carboxyvinyl)-alpha-D-glucosamine + phosphate. It participates in cell wall biogenesis; peptidoglycan biosynthesis. Functionally, cell wall formation. Adds enolpyruvyl to UDP-N-acetylglucosamine. The sequence is that of UDP-N-acetylglucosamine 1-carboxyvinyltransferase from Serratia proteamaculans (strain 568).